The chain runs to 941 residues: Zinc finger protein su(Hw) (941 aa).

Disordered regions lie at residues 1–97 (MSAS…APAA) and 176–211 (ENNN…NSSQ). The span at 47–57 (STTTTTSRTPS) shows a compositional bias: low complexity. Residues 185 to 202 (VTEDDEDLGEDGDEDGED) show a composition bias toward acidic residues. Thr-186 carries the phosphothreonine modification. The C2H2-type 1; atypical zinc finger occupies 220–242 (HVCGKCYKTFRRVQSLKKHLEFC). A C2H2-type 2 zinc finger spans residues 290 to 313 (INCPDCPKSFKTQTSYERHIFITH). The C2H2-type 3; atypical zinc finger occupies 319-341 (FPCSICNANLRSEALLALHEEQH). 9 consecutive C2H2-type zinc fingers follow at residues 348–366 (YACK…LKRH), 380–402 (MSCK…LKQH), 413–435 (YMCH…IRTH), 441–463 (FDCD…RRYH), 469–491 (YSCT…MKRH), 497–519 (HKCD…SKTH), 523–545 (FPCE…VKTH), 553–577 (FSCA…EGKH), and 596–619 (TDCA…RTVH). Residues 760–860 (ILTEEDIKLK…PIDDVIEYVL (101 aa)) form an interaction with mod(mdg4) region. The segment at 864–941 (DQDEGGLDKD…KKPVGEQEKA (78 aa)) is disordered. Composition is skewed to basic and acidic residues over residues 869 to 880 (GLDKDNESHSGD) and 891 to 941 (KTNE…QEKA).

In terms of assembly, component of the gypsy chromatin insulator complex, composed of Cp190, mod(mdg4) and su(Hw). The gypsy chromatin insulator complex interacts with Topors via mod(mdg4) and su(Hw). Upon ecdysone stimulation, interacts with Nup98.

The protein localises to the nucleus. It is found in the chromosome. Its function is as follows. Component of the gypsy chromatin insulator complex which is required for the function of the gypsy chromatin insulator and other endogenous chromatin insulators. Chromatin insulators are regulatory elements which establish independent domains of transcriptional activity within eukaryotic genomes. Insulators have two defining properties; they can block the communication between an enhancer and a promoter when placed between them and can also buffer transgenes from position effect variegation (PEV). Insulators are proposed to structure the chromatin fiber into independent domains of differing transcriptional potential by promoting the formation of distinct chromatin loops. This chromatin looping may involve the formation of insulator bodies, where homotypic interactions between individual subunits of the insulator complex could promote the clustering of widely spaced insulators at the nuclear periphery. Within the gypsy insulator complex, this protein binds specifically to a region of the gypsy element located 3' of the 5' long terminal repeat (LTR), and may also mediate interaction with other endogenous insulators at sites distinct from those recognized by Cp190. Cooperates with pita and cliff to recruit Cp190 and regulate insulator function at the front-ultraabdominal (Fub) boundary. This is Zinc finger protein su(Hw) from Drosophila melanogaster (Fruit fly).